The chain runs to 491 residues: Argininosuccinate lyase (491 aa).

The protein belongs to the lyase 1 family. Argininosuccinate lyase subfamily.

It is found in the cytoplasm. The catalysed reaction is 2-(N(omega)-L-arginino)succinate = fumarate + L-arginine. Its pathway is amino-acid biosynthesis; L-arginine biosynthesis; L-arginine from L-ornithine and carbamoyl phosphate: step 3/3. In Methanosarcina acetivorans (strain ATCC 35395 / DSM 2834 / JCM 12185 / C2A), this protein is Argininosuccinate lyase.